A 185-amino-acid chain; its full sequence is Threonylcarbamoyl-AMP synthase (185 aa).

In terms of domain architecture, YrdC-like spans 4 to 185 (SWRVQQAAQN…IATGQVMRAG (182 aa)).

It belongs to the SUA5 family. TsaC subfamily.

It is found in the cytoplasm. It carries out the reaction L-threonine + hydrogencarbonate + ATP = L-threonylcarbamoyladenylate + diphosphate + H2O. Required for the formation of a threonylcarbamoyl group on adenosine at position 37 (t(6)A37) in tRNAs that read codons beginning with adenine. Catalyzes the conversion of L-threonine, HCO(3)(-)/CO(2) and ATP to give threonylcarbamoyl-AMP (TC-AMP) as the acyladenylate intermediate, with the release of diphosphate. This Pseudomonas syringae pv. tomato (strain ATCC BAA-871 / DC3000) protein is Threonylcarbamoyl-AMP synthase.